Reading from the N-terminus, the 210-residue chain is 3-hexulose-6-phosphate synthase (210 aa).

Belongs to the HPS/KGPDC family. HPS subfamily.

It catalyses the reaction D-ribulose 5-phosphate + formaldehyde = D-arabino-hex-3-ulose 6-phosphate. Its pathway is one-carbon metabolism; formaldehyde assimilation via RuMP pathway; D-fructose 6-phosphate from D-ribulose 5-phosphate and formaldehyde: step 1/2. In terms of biological role, catalyzes the condensation of ribulose 5-phosphate with formaldehyde to form 3-hexulose 6-phosphate. The protein is 3-hexulose-6-phosphate synthase of Staphylococcus epidermidis (strain ATCC 12228 / FDA PCI 1200).